Reading from the N-terminus, the 83-residue chain is Toxin Aam1 (83 aa).

Residues 1–19 (MNYLVMISLALLLMIGVES) form the signal peptide. The LCN-type CS-alpha/beta domain maps to 21–82 (RDGYIVYPHN…PIYDRSYKCY (62 aa)). 4 disulfide bridges follow: C31–C81, C35–C53, C39–C63, and C43–C65.

The protein belongs to the long (4 C-C) scorpion toxin superfamily. Sodium channel inhibitor family. Alpha subfamily. Post-translationally, the C-terminal basic residue is removed by a carboxypeptidase. Expressed by the venom gland.

It is found in the secreted. Functionally, alpha toxins bind voltage-independently at site-3 of sodium channels (Nav) and inhibit the inactivation of the activated channels, thereby blocking neuronal transmission. In Androctonus amoreuxi (African fattail scorpion), this protein is Toxin Aam1 (H1).